The chain runs to 144 residues: Large ribosomal subunit protein uL15 (144 aa).

The segment at 1-51 (MQLNTLSPAQGEKKSRKRVGRGIGSGIGKTCGSGHKGQKSRSGGFNKIGFE) is disordered. Residues 21-35 (RGIGSGIGKTCGSGH) show a composition bias toward gly residues.

Belongs to the universal ribosomal protein uL15 family. As to quaternary structure, part of the 50S ribosomal subunit.

In terms of biological role, binds to the 23S rRNA. This is Large ribosomal subunit protein uL15 from Vesicomyosocius okutanii subsp. Calyptogena okutanii (strain HA).